Consider the following 544-residue polypeptide: ATP-dependent RNA helicase HAS1 (544 aa).

A compositionally biased stretch (low complexity) spans 1 to 10 (MSSTKPPTTT). Residues 1-59 (MSSTKPPTTTNKRKRTSNAHDEAPAKRVPEASSSKVTLDDSQPAPATSSDAVLGARSAP) are disordered. The segment covering 18–29 (NAHDEAPAKRVP) has biased composition (basic and acidic residues). Over residues 31 to 50 (ASSSKVTLDDSQPAPATSSD) the composition is skewed to polar residues. Positions 66–94 (VPFSTLNLSPPTTAAIERMGFETMTEVQA) match the Q motif motif. One can recognise a Helicase ATP-binding domain in the interval 97-273 (IPPLLAGKDV…RISLRPGPLY (177 aa)). Residue 110–117 (ARTGSGKT) participates in ATP binding. The short motif at 220–223 (DEAD) is the DEAD box element. The 170-residue stretch at 287–456 (MLEQGYVVCE…DVQKQLESLI (170 aa)) folds into the Helicase C-terminal domain. The short motif at 299–315 (QRFMLLFTFLKKNLKKK) is the Bipartite nuclear localization signal element. The disordered stretch occupies residues 513–544 (GSVKAKKSRDEDESSDDDGQPKKAYYRNRGRK).

The protein belongs to the DEAD box helicase family. DDX18/HAS1 subfamily. Associates in the nucleolus with the 60S and pre-60S ribosomal subunits.

The protein localises to the nucleus. It localises to the nucleolus. The catalysed reaction is ATP + H2O = ADP + phosphate + H(+). Functionally, ATP-dependent RNA helicase involved in 40S ribosomal subunit biogenesis. Required for the processing and cleavage of 35S pre-rRNA at sites A0, A1, and A2, leading to mature 18S rRNA. The sequence is that of ATP-dependent RNA helicase HAS1 (HAS1) from Cryptococcus neoformans var. neoformans serotype D (strain JEC21 / ATCC MYA-565) (Filobasidiella neoformans).